The sequence spans 275 residues: Bis(5'-nucleosyl)-tetraphosphatase, symmetrical (275 aa).

It belongs to the Ap4A hydrolase family.

The enzyme catalyses P(1),P(4)-bis(5'-adenosyl) tetraphosphate + H2O = 2 ADP + 2 H(+). Hydrolyzes diadenosine 5',5'''-P1,P4-tetraphosphate to yield ADP. This is Bis(5'-nucleosyl)-tetraphosphatase, symmetrical from Photorhabdus laumondii subsp. laumondii (strain DSM 15139 / CIP 105565 / TT01) (Photorhabdus luminescens subsp. laumondii).